The primary structure comprises 284 residues: NAD kinase (284 aa).

The active-site Proton acceptor is D61. NAD(+) contacts are provided by residues 61 to 62 (DG), R66, 136 to 137 (ND), R147, K164, D166, and L201.

Belongs to the NAD kinase family. It depends on a divalent metal cation as a cofactor.

The protein resides in the cytoplasm. The catalysed reaction is NAD(+) + ATP = ADP + NADP(+) + H(+). In terms of biological role, involved in the regulation of the intracellular balance of NAD and NADP, and is a key enzyme in the biosynthesis of NADP. Catalyzes specifically the phosphorylation on 2'-hydroxyl of the adenosine moiety of NAD to yield NADP. The chain is NAD kinase from Dehalococcoides mccartyi (strain ATCC BAA-2100 / JCM 16839 / KCTC 5957 / BAV1).